Consider the following 390-residue polypeptide: Anhydro-N-acetylmuramic acid kinase (390 aa).

An ATP-binding site is contributed by 9–16 (GTSLDGID).

The protein belongs to the anhydro-N-acetylmuramic acid kinase family.

The catalysed reaction is 1,6-anhydro-N-acetyl-beta-muramate + ATP + H2O = N-acetyl-D-muramate 6-phosphate + ADP + H(+). The protein operates within amino-sugar metabolism; 1,6-anhydro-N-acetylmuramate degradation. It functions in the pathway cell wall biogenesis; peptidoglycan recycling. Catalyzes the specific phosphorylation of 1,6-anhydro-N-acetylmuramic acid (anhMurNAc) with the simultaneous cleavage of the 1,6-anhydro ring, generating MurNAc-6-P. Is required for the utilization of anhMurNAc either imported from the medium or derived from its own cell wall murein, and thus plays a role in cell wall recycling. The chain is Anhydro-N-acetylmuramic acid kinase from Bacillus cereus (strain B4264).